A 430-amino-acid polypeptide reads, in one-letter code: Probable carboxypeptidase AO090003000058 (430 aa).

A signal peptide spans 1–16 (MKSIYSLVLCTALTAA). Asparagine 84 carries an N-linked (GlcNAc...) asparagine glycan. Aspartate 156 contacts Zn(2+). Glutamate 188 functions as the Proton acceptor in the catalytic mechanism. Position 189 (glutamate 189) interacts with Zn(2+). Asparagine 285 carries N-linked (GlcNAc...) asparagine glycosylation.

Belongs to the peptidase M20A family. It depends on Zn(2+) as a cofactor.

It is found in the secreted. This is Probable carboxypeptidase AO090003000058 from Aspergillus oryzae (strain ATCC 42149 / RIB 40) (Yellow koji mold).